Here is a 312-residue protein sequence, read N- to C-terminus: Olfactory receptor-like protein COR2 (312 aa).

Residues 1-26 (MASGNCTTPTTFILSGLTDNPRLQMP) lie on the Extracellular side of the membrane. Residue Asn5 is glycosylated (N-linked (GlcNAc...) asparagine). A helical transmembrane segment spans residues 27–49 (LFMVFLVIYTTTLLTNLGLIALI). Residues 50–57 (GMDLHLQT) lie on the Cytoplasmic side of the membrane. Residues 58–79 (PMYIFLQNLSFTDAAYSTVITP) form a helical membrane-spanning segment. At 80–100 (KMLATFLEERRTISYVGCILQ) the chain is on the extracellular side. A disulfide bridge connects residues Cys97 and Cys179. A helical transmembrane segment spans residues 101–120 (YFSFVLLTTSEWLLLAVMAY). Residues 121–139 (DRYVAICKPLLYPSIMTKA) are Cytoplasmic-facing. A helical membrane pass occupies residues 140 to 164 (VCWRLVKGLYSLAFLNSLVHTSGLL). The Extracellular portion of the chain corresponds to 165–205 (KLSFCSSNVVNHFFCDNRPLFQISSSSTTLNELLVIISGSL). The helical transmembrane segment at 206–226 (FVMSSIITILISYVFIILTVV) threads the bilayer. Topologically, residues 227–239 (MIRSKDGKYKAFS) are cytoplasmic. A helical membrane pass occupies residues 240–260 (TCTSHLMAVSLFHGTVIFMYL). Residues 261–271 (RSVKLFSLDTD) lie on the Extracellular side of the membrane. Residues 272–292 (KIASLFYTVVIPMLNPLIYSW) form a helical membrane-spanning segment. The Cytoplasmic portion of the chain corresponds to 293 to 312 (RNKEVKDALRRLTATSVWLH).

Belongs to the G-protein coupled receptor 1 family.

The protein resides in the cell membrane. In terms of biological role, odorant receptor. This chain is Olfactory receptor-like protein COR2 (COR2), found in Gallus gallus (Chicken).